The sequence spans 121 residues: MARIAGVNIPNHQHTEIGLTAIFGIGRTRARSICVASGVAFSKKVKDLTDADLEKLREEVGKFVVEGDLRREVTMNIKRLMDLGCYRGVRHRKGLPLRGQRTRTNARTRKGPRRAAQALKK.

The tract at residues 94–121 is disordered; the sequence is GLPLRGQRTRTNARTRKGPRRAAQALKK.

It belongs to the universal ribosomal protein uS13 family. In terms of assembly, part of the 30S ribosomal subunit. Forms a loose heterodimer with protein S19. Forms two bridges to the 50S subunit in the 70S ribosome.

Located at the top of the head of the 30S subunit, it contacts several helices of the 16S rRNA. In the 70S ribosome it contacts the 23S rRNA (bridge B1a) and protein L5 of the 50S subunit (bridge B1b), connecting the 2 subunits; these bridges are implicated in subunit movement. Contacts the tRNAs in the A and P-sites. This Burkholderia mallei (strain NCTC 10247) protein is Small ribosomal subunit protein uS13.